We begin with the raw amino-acid sequence, 637 residues long: 1-deoxy-D-xylulose-5-phosphate synthase (637 aa).

Residues histidine 76 and 117–119 each bind thiamine diphosphate; that span reads GHS. Mg(2+) is bound at residue aspartate 148. Residues 149 to 150, asparagine 177, tyrosine 294, and glutamate 381 contribute to the thiamine diphosphate site; that span reads GA. Asparagine 177 lines the Mg(2+) pocket.

It belongs to the transketolase family. DXPS subfamily. Homodimer. It depends on Mg(2+) as a cofactor. Requires thiamine diphosphate as cofactor.

It catalyses the reaction D-glyceraldehyde 3-phosphate + pyruvate + H(+) = 1-deoxy-D-xylulose 5-phosphate + CO2. It participates in metabolic intermediate biosynthesis; 1-deoxy-D-xylulose 5-phosphate biosynthesis; 1-deoxy-D-xylulose 5-phosphate from D-glyceraldehyde 3-phosphate and pyruvate: step 1/1. In terms of biological role, catalyzes the acyloin condensation reaction between C atoms 2 and 3 of pyruvate and glyceraldehyde 3-phosphate to yield 1-deoxy-D-xylulose-5-phosphate (DXP). The protein is 1-deoxy-D-xylulose-5-phosphate synthase of Neisseria meningitidis serogroup A / serotype 4A (strain DSM 15465 / Z2491).